The primary structure comprises 81 residues: Small ribosomal subunit protein bS16 (81 aa).

The protein belongs to the bacterial ribosomal protein bS16 family.

The chain is Small ribosomal subunit protein bS16 from Lachnospira eligens (strain ATCC 27750 / DSM 3376 / VPI C15-48 / C15-B4) (Eubacterium eligens).